The primary structure comprises 377 residues: Guanine nucleotide-binding protein subunit beta (377 aa).

7 WD repeats span residues 63–93 (GHTG…IVWN), 105–135 (LPCA…SIFN), 154–185 (GHKG…VLWD), 202–233 (GHTA…RLWD), 246–276 (CHEG…RLFD), 293–323 (GDIP…YVWD), and 339–369 (SHEG…KIWA).

This sequence belongs to the WD repeat G protein beta family. G proteins are composed of 3 units, alpha, beta and gamma.

The protein localises to the cell membrane. Its subcellular location is the endoplasmic reticulum membrane. Guanine nucleotide-binding proteins (G proteins) are involved as a modulator or transducer in various transmembrane signaling systems. The beta and gamma chains are required for the GTPase activity, for replacement of GDP by GTP, and for G protein-effector interaction. This chain is Guanine nucleotide-binding protein subunit beta, found in Nicotiana plumbaginifolia (Leadwort-leaved tobacco).